Consider the following 120-residue polypeptide: Meiosis expressed gene 1 protein homolog (120 aa).

Residues 1 to 45 (MDGLAIGGVSAPMTAERPQQVKKQLSRRTPDAADGRKPTRMERAK) form a disordered region. A compositionally biased stretch (basic and acidic residues) spans 28 to 45 (RTPDAADGRKPTRMERAK).

This sequence belongs to the MEIG1 family.

The polypeptide is Meiosis expressed gene 1 protein homolog (Oxyrrhis marina (Dinoflagellate)).